The following is a 614-amino-acid chain: Chaperone protein DnaK (614 aa).

Threonine 174 is subject to Phosphothreonine; by autocatalysis. Residues 576-614 (QTGGAAPGPDMGADPGAGGAQGDDNVVDAEYTEVDKDQK) are disordered. Over residues 578–589 (GGAAPGPDMGAD) the composition is skewed to low complexity.

The protein belongs to the heat shock protein 70 family.

In terms of biological role, acts as a chaperone. The protein is Chaperone protein DnaK of Desulfitobacterium hafniense (strain DSM 10664 / DCB-2).